The primary structure comprises 722 residues: MFRQWSVQSGPAPRRPESQAASEELWEQEVERLCASRTPVRMLPYAMADKRFIRELREPEGVKTTFWQRWHRPRRVARQHLREAEQRLARGFGLWEGALYEIGGLFGTGIQSYFTFLRFLLLLNLLTMLLTACFVLLPLVWLRPPELGPALKLRLQCSSSPLPQSDIPRFHNPLWNILTGRAFNNTYLFYGAYRAGPESSSEYSIRLAYLLSPMVCLLLCFCGILQRMAEGLPQQTLLGQRYRTPLSAKVFSSWDFCIRVWEAATIKKHEISNELKMELEEGRRVELAQQQTRAQKACRLLTYLRTNILIVLLVVGAISAIFWATKYSQDNKEESLFLVLQYLPPGVISLVNFLGPQLFTVLIQLENYPPGTEVNLTLIWCVVLKLASLGMFSFSLGQTVLCIGRNKTSCESYGYNACDYQCWENSVGEELYKLIIFNFLLTVAFAFLVSLPRRLLVERFSGWFWTWLDREEFLVPKNVLDIVAAQTVTWMGLFYCPLLPLLNSVFLFLTFYIKKYTLLRNSRASPRRFRASSSTFFFHLVLLLGLLLAAVPLAYVISSTHSSWDCGLFTNYSAPWQVVPELVALQLPLPSQRALRYLSSHAFSFPLLILLSIVLTVCISQSRANARAIQGLRKQLVWQVQEKWHLVDDLSRLLPELSPEPGSPHSRASRPRSFCPGFPCPGSPGPRTPRLAPSNRLSSSSLGAPSASVPASRFHFPSRTEL.

The segment at 1–21 (MFRQWSVQSGPAPRRPESQAA) is disordered. Over 1–118 (MFRQWSVQSG…GIQSYFTFLR (118 aa)) the chain is Cytoplasmic. A phosphoserine mark is found at S6 and S18. Residues 119-139 (FLLLLNLLTMLLTACFVLLPL) traverse the membrane as a helical segment. Topologically, residues 140–204 (VWLRPPELGP…AGPESSSEYS (65 aa)) are lumenal. N-linked (GlcNAc...) asparagine glycosylation occurs at N184. Residues 205 to 225 (IRLAYLLSPMVCLLLCFCGIL) form a helical membrane-spanning segment. Topologically, residues 226–307 (QRMAEGLPQQ…CRLLTYLRTN (82 aa)) are cytoplasmic. A helical transmembrane segment spans residues 308-328 (ILIVLLVVGAISAIFWATKYS). Residues 329 to 375 (QDNKEESLFLVLQYLPPGVISLVNFLGPQLFTVLIQLENYPPGTEVN) are Lumenal-facing. The interval 366–534 (ENYPPGTEVN…SPRRFRASSS (169 aa)) is TMC domain. N375 carries N-linked (GlcNAc...) asparagine glycosylation. Residues 376 to 396 (LTLIWCVVLKLASLGMFSFSL) traverse the membrane as a helical segment. Residues 397–430 (GQTVLCIGRNKTSCESYGYNACDYQCWENSVGEE) lie on the Cytoplasmic side of the membrane. Residues 431 to 451 (LYKLIIFNFLLTVAFAFLVSL) traverse the membrane as a helical segment. Over 452–492 (PRRLLVERFSGWFWTWLDREEFLVPKNVLDIVAAQTVTWMG) the chain is Lumenal. The chain crosses the membrane as a helical span at residues 493-513 (LFYCPLLPLLNSVFLFLTFYI). At 514–536 (KKYTLLRNSRASPRRFRASSSTF) the chain is on the cytoplasmic side. A helical transmembrane segment spans residues 537–557 (FFHLVLLLGLLLAAVPLAYVI). At 558–598 (SSTHSSWDCGLFTNYSAPWQVVPELVALQLPLPSQRALRYL) the chain is on the lumenal side. N571 carries an N-linked (GlcNAc...) asparagine glycan. Residues 599 to 619 (SSHAFSFPLLILLSIVLTVCI) traverse the membrane as a helical segment. The Cytoplasmic portion of the chain corresponds to 620-722 (SQSRANARAI…RFHFPSRTEL (103 aa)). S658, S663, and S673 each carry phosphoserine. The disordered stretch occupies residues 658 to 722 (SPEPGSPHSR…RFHFPSRTEL (65 aa)). Positions 678–687 (FPCPGSPGPR) are enriched in pro residues. The span at 689–712 (PRLAPSNRLSSSSLGAPSASVPAS) shows a compositional bias: low complexity. A Phosphoserine modification is found at S698.

This sequence belongs to the TMC family. In terms of assembly, interacts with TMC6. Interacts and forms a complex with TMC6 and CIB1; the interaction stabilizes each component of the complex. Interacts and forms a complex with TMC6 and SLC30A1/ZNT1; the interaction regulates zinc transport into the ER. Interacts with TRADD; the interaction competes with TRADD/RIPK1/TRAF2/cIAPs complex I formation and facilites complex II formation. Expressed in thymus, lung, prostate, placenta, testis and spleen. Expressed in lymphocytes and peripheral lymphocytes.

It is found in the endoplasmic reticulum membrane. The protein resides in the golgi apparatus membrane. The protein localises to the nucleus membrane. Its function is as follows. Acts as a regulatory protein involved in the regulation of numerous cellular processes. Together with its homolog TMC6/EVER1, forms a complex with calcium-binding protein CIB1 in lymphocytes and keratynocytes where TMC6 and TMC8 stabilize CIB1 levels and reciprocally. Together with TMC6, also forms a complex with and activates zinc transporter ZNT1 at the ER membrane of keratynocytes, thereby facilitating zinc uptake into the ER. Also inhibits receptor-mediated calcium release from ER stores and calcium activated and volume regulated chloride channels. Down-regulates the activity of transcription factors induced by zinc and cytokines. Also sequesters TRADD which impairs the recruitment of TRAF2 and RIPK1 in the pro-survival complex I and promotes proapoptotic complex II formation, and may therefore be involved in TNF-induced cell death/survival decisions. In Mus musculus (Mouse), this protein is Transmembrane channel-like protein 8.